The sequence spans 495 residues: Probable lysine-specific demethylase 4A (495 aa).

In terms of domain architecture, JmjN spans I18 to R60. A 2-oxoglutarate-binding site is contributed by Y139. Positions D149–C315 constitute a JmjC domain. Fe cation-binding residues include H195 and E197. The 2-oxoglutarate site is built by N205 and K213. Positions 241 and 247 each coordinate Zn(2+). K248 is a 2-oxoglutarate binding site. H283 is a Fe cation binding site. Zn(2+) is bound by residues C313 and C315. Phosphoserine is present on S409.

It belongs to the JHDM3 histone demethylase family. The cofactor is Fe(2+).

It is found in the nucleus. The catalysed reaction is N(6),N(6),N(6)-trimethyl-L-lysyl(9)-[histone H3] + 2 2-oxoglutarate + 2 O2 = N(6)-methyl-L-lysyl(9)-[histone H3] + 2 formaldehyde + 2 succinate + 2 CO2. It carries out the reaction N(6),N(6),N(6)-trimethyl-L-lysyl(36)-[histone H3] + 2 2-oxoglutarate + 2 O2 = N(6)-methyl-L-lysyl(36)-[histone H3] + 2 formaldehyde + 2 succinate + 2 CO2. Its function is as follows. Probable histone demethylase that specifically demethylates 'Lys-9' and 'Lys-36' residues of histone H3, thereby playing a central role in histone code. Demethylation of Lys residue generates formaldehyde and succinate. The polypeptide is Probable lysine-specific demethylase 4A (Kdm4A) (Drosophila melanogaster (Fruit fly)).